The sequence spans 447 residues: Monocarboxylate transporter 11 (447 aa).

Residues 1 to 11 are Cytoplasmic-facing; that stretch reads MTPKPAGPPDG. The next 12 membrane-spanning stretches (helical) occupy residues 12 to 32, 54 to 74, 80 to 100, 107 to 127, 139 to 159, 162 to 182, 219 to 239, 249 to 269, 288 to 308, 330 to 350, 354 to 374, and 383 to 403; these read GWGW…YGLL, AWVS…GSAL, ARPV…FSAF, LYLG…APAL, VLAV…LAPA, FLLD…VTLH, AFSV…VPYV, GMGG…DACA, LVVF…VPTV, GSYA…GGVV, GLVM…SGFL, and ASFL…MGLP. The Cytoplasmic segment spans residues 404–447; the sequence is RALPSCRPASPPATPPPERGELLPVPQVSLLSAGGTGSIRDTTC.

It belongs to the major facilitator superfamily. Monocarboxylate porter (TC 2.A.1.13) family. In terms of assembly, interacts with isoform 2 of BSG.

Its subcellular location is the endoplasmic reticulum membrane. The protein localises to the cell membrane. It carries out the reaction pyruvate(out) + H(+)(out) = pyruvate(in) + H(+)(in). Its function is as follows. Proton-linked monocarboxylate transporter. It catalyzes the transport of pyruvate across the plasma membrane. Probably involved in hepatic lipid metabolism: overexpression results in an increase of triacylglycerol(TAG) levels, small increases in intracellular diacylglycerols and decreases in lysophosphatidylcholine, cholesterol ester and sphingomyelin lipids. This is Monocarboxylate transporter 11 (Slc16a11) from Mus musculus (Mouse).